The sequence spans 403 residues: SH3 and cysteine-rich domain-containing protein (403 aa).

Residues 1–51 are disordered; sequence MIPPSGAREDSGDGLTGEATGTEQPPSPASTSSLESKLQKLKRSLSFKTKS. Residues 19–36 are compositionally biased toward polar residues; the sequence is ATGTEQPPSPASTSSLES. The segment covering 39–51 has biased composition (basic residues); the sequence is QKLKRSLSFKTKS. The segment at 108–160 adopts a Phorbol-ester/DAG-type zinc-finger fold; it reads LHAFQEHVFKKPTFCDVCNHMIVGTHAKHGLRCGACKMSIHHKCADGLAPQRC. Residues 212–264 are disordered; the sequence is QRTKKGGSGSGSDSPPRTSTSELVDVPEEADGPGDGSDMRTRSNSVFTYPENG. A compositionally biased stretch (low complexity) spans 222 to 232; it reads GSDSPPRTSTS. 2 consecutive SH3 domains span residues 286-345 and 348-403; these read LQMN…RVEE and KIYR…LVDV.

As to quaternary structure, interacts (via SH3 domains) with CACNA1S. Interacts with CACNA1H. Interacts with CACNA1C. Expressed predominantly in brain Detected in brain neurons, more specifically in hippocampus, cerebellum and inferior olive. Highly expressed in urinary bladder, and detected at lower levels in adrenal gland. Detected at very low levels in heart, liver, lung and kidney.

The protein resides in the cytoplasm. It is found in the cytosol. Its subcellular location is the cell membrane. It localises to the sarcolemma. Functionally, promotes expression of the ion channel CACNA1H at the cell membrane, and thereby contributes to the regulation of channel activity. Plays a minor and redundant role in promoting the expression of calcium channel CACNA1S at the cell membrane, and thereby contributes to increased channel activity. Slows the rate of calcium-mediated inactivation of CACNA1C calcium channel activity. This chain is SH3 and cysteine-rich domain-containing protein, found in Mus musculus (Mouse).